The chain runs to 347 residues: Holliday junction branch migration complex subunit RuvB (347 aa).

Residues 1–180 form a large ATPase domain (RuvB-L) region; sequence MTSRVVSPEQ…FGIPCRMNFY (180 aa). Residues L19, R20, G61, K64, T65, T66, 127–129, R170, Y180, and R217 contribute to the ATP site; that span reads EDF. Mg(2+) is bound at residue T65. The interval 181 to 251 is small ATPAse domain (RuvB-S); sequence EPAELEAIVS…VADAALNRLE (71 aa). The interval 254–347 is head domain (RuvB-H); that stretch reads RIGLDAMDRR…LLTRMDEEGE (94 aa). DNA-binding residues include R290, R309, and R314.

Belongs to the RuvB family. Homohexamer. Forms an RuvA(8)-RuvB(12)-Holliday junction (HJ) complex. HJ DNA is sandwiched between 2 RuvA tetramers; dsDNA enters through RuvA and exits via RuvB. An RuvB hexamer assembles on each DNA strand where it exits the tetramer. Each RuvB hexamer is contacted by two RuvA subunits (via domain III) on 2 adjacent RuvB subunits; this complex drives branch migration. In the full resolvosome a probable DNA-RuvA(4)-RuvB(12)-RuvC(2) complex forms which resolves the HJ.

It is found in the cytoplasm. It carries out the reaction ATP + H2O = ADP + phosphate + H(+). Functionally, the RuvA-RuvB-RuvC complex processes Holliday junction (HJ) DNA during genetic recombination and DNA repair, while the RuvA-RuvB complex plays an important role in the rescue of blocked DNA replication forks via replication fork reversal (RFR). RuvA specifically binds to HJ cruciform DNA, conferring on it an open structure. The RuvB hexamer acts as an ATP-dependent pump, pulling dsDNA into and through the RuvAB complex. RuvB forms 2 homohexamers on either side of HJ DNA bound by 1 or 2 RuvA tetramers; 4 subunits per hexamer contact DNA at a time. Coordinated motions by a converter formed by DNA-disengaged RuvB subunits stimulates ATP hydrolysis and nucleotide exchange. Immobilization of the converter enables RuvB to convert the ATP-contained energy into a lever motion, pulling 2 nucleotides of DNA out of the RuvA tetramer per ATP hydrolyzed, thus driving DNA branch migration. The RuvB motors rotate together with the DNA substrate, which together with the progressing nucleotide cycle form the mechanistic basis for DNA recombination by continuous HJ branch migration. Branch migration allows RuvC to scan DNA until it finds its consensus sequence, where it cleaves and resolves cruciform DNA. The polypeptide is Holliday junction branch migration complex subunit RuvB (Paramagnetospirillum magneticum (strain ATCC 700264 / AMB-1) (Magnetospirillum magneticum)).